Here is a 450-residue protein sequence, read N- to C-terminus: MPKNKKRNTPHRGGSGGGGSGAAATTAATAGGQHRNVQPFSDEDASIETMSHCSGYSDPSSFAEDGPEVLDEEGTQEDLEYKLKGLIDLTLDKSAKTRQAALEGIKNALASRMLYEFILERRMTLTDSIERCLKKGKSDEQRAAAALASVLCIQLGPGIESEEVLKTLGPVLKKIICDGTASIQARQTCATCFGVCCFIATDDITELYSTLQCLENIFTKSYLKEKDSNVICSTPNTALHISSLLAWTLLLTICPLSEVKKKLEMHVHKLPSLLSSDDVNMRIAAGESLALLFELARGMESDFFYEDMESLTQMLRALATDGNKHRAKVDKRKQRSVFRDILRAVEERDFPTETVKFGPERMYIDCWVKKRTYDTFKEILGSGMQYHLQSNEFLRNVFELGPPVMLDAATLKTMKISRFERHLYNSAAFKARTKARSKCRDKRADVGEFF.

Over residues 1–10 (MPKNKKRNTP) the composition is skewed to basic residues. The tract at residues 1–46 (MPKNKKRNTPHRGGSGGGGSGAAATTAATAGGQHRNVQPFSDEDAS) is disordered. The segment covering 22–32 (AAATTAATAGG) has biased composition (low complexity).

The protein belongs to the IFRD family. In terms of assembly, interacts with PSIP1/LEDGF.

Could play a role in regulating gene activity in the proliferative and/or differentiative pathways induced by NGF. May be an autocrine factor that attenuates or amplifies the initial ligand-induced signal. This chain is Interferon-related developmental regulator 1 (IFRD1), found in Sus scrofa (Pig).